The sequence spans 602 residues: PEX5-related protein (602 aa).

2 disordered regions span residues 94-140 and 167-206; these read VSQT…PETS and HLMA…LNSE. Phosphoserine occurs at positions 181, 229, 233, and 237. TPR repeat units lie at residues 302-335, 336-369, and 371-403; these read WPGA…DPGN, AEAW…QPNN, and KALM…NPKY. 2 positions are modified to phosphoserine: S421 and S423. TPR repeat units lie at residues 450-483, 485-517, and 519-551; these read PDLQ…RPED, SLWN…QPGF, and RSRY…QRKS.

It belongs to the peroxisomal targeting signal receptor family. Forms an obligate 4:4 complex with HCN2. Interacts with RAB8B. Interacts with HCN3. Interacts with HCN4 with a 4:4 HCN4:PEX5L stoichiometry; reduces the effects of cAMP on the voltage-dependence and rate of activation of HCN4. Brain specific.

It localises to the cytoplasm. It is found in the membrane. In terms of biological role, accessory subunit of hyperpolarization-activated cyclic nucleotide-gated (HCN) channels, regulating their cell-surface expression and cyclic nucleotide dependence. This is PEX5-related protein (Pex5l) from Rattus norvegicus (Rat).